We begin with the raw amino-acid sequence, 85 residues long: MAHKKGVGSTRNGRDSDGQRLGCKKFGGEHVKAGNIIYRQHGTKIHPGNNVGLGRDYTLFALIEGVVKFERMGRDRKKVSVYPAN.

The tract at residues 1–21 is disordered; sequence MAHKKGVGSTRNGRDSDGQRL.

It belongs to the bacterial ribosomal protein bL27 family.

The sequence is that of Large ribosomal subunit protein bL27 from Geotalea uraniireducens (strain Rf4) (Geobacter uraniireducens).